Consider the following 189-residue polypeptide: Calcyphosin (189 aa).

4 consecutive EF-hand domains span residues 21-56 (SGIQ…LGLV), 57-92 (LDTA…PMSQ), 93-128 (AREA…RTHP), and 136-172 (TEEQ…VSAS). Ca(2+)-binding residues include Asp-34, Asp-36, Ser-38, Ser-40, Glu-45, Asp-70, Asp-72, Ser-74, Thr-76, Glu-81, Asp-106, Ser-108, Asp-110, and Asp-117. At Ser-40 the chain carries Phosphoserine; by PKA.

As to quaternary structure, monomer. Does not form oligomers in the presence of calcium.

It is found in the cytoplasm. Calcium-binding protein. May play a role in cellular signaling events (Potential). This chain is Calcyphosin (CAPS), found in Bos taurus (Bovine).